Consider the following 1140-residue polypeptide: Multiple epidermal growth factor-like domains protein 10 (1140 aa).

The N-terminal stretch at 1–25 (MVISLNSCLSFICLLLCHWIGTASP) is a signal peptide. The interval 1 to 857 (MVISLNSCLS…ALPADSYQIG (857 aa)) is necessary for interaction with AP2M1, self-assembly and formation of the irregular, mosaic-like adhesion pattern. Over 26-857 (LNLEDPNVCS…ALPADSYQIG (832 aa)) the chain is Extracellular. An EMI domain is found at 30 to 107 (DPNVCSHWES…FYESGEMCVP (78 aa)). Cystine bridges form between cysteine 34/cysteine 95, cysteine 60/cysteine 69, cysteine 94/cysteine 105, cysteine 109/cysteine 118, cysteine 113/cysteine 124, cysteine 126/cysteine 135, cysteine 148/cysteine 160, cysteine 154/cysteine 167, cysteine 169/cysteine 178, cysteine 191/cysteine 203, cysteine 197/cysteine 210, cysteine 212/cysteine 221, cysteine 234/cysteine 246, cysteine 240/cysteine 253, cysteine 255/cysteine 264, cysteine 281/cysteine 289, cysteine 283/cysteine 296, cysteine 298/cysteine 307, cysteine 320/cysteine 332, cysteine 326/cysteine 339, cysteine 341/cysteine 350, cysteine 409/cysteine 421, cysteine 415/cysteine 428, cysteine 430/cysteine 439, cysteine 456/cysteine 464, cysteine 458/cysteine 471, cysteine 473/cysteine 482, cysteine 495/cysteine 507, cysteine 501/cysteine 514, cysteine 516/cysteine 525, cysteine 542/cysteine 550, cysteine 544/cysteine 557, cysteine 559/cysteine 568, cysteine 581/cysteine 593, cysteine 587/cysteine 600, cysteine 602/cysteine 611, cysteine 669/cysteine 681, cysteine 675/cysteine 688, cysteine 690/cysteine 699, cysteine 716/cysteine 724, cysteine 718/cysteine 731, cysteine 733/cysteine 742, cysteine 755/cysteine 767, cysteine 761/cysteine 774, cysteine 776/cysteine 785, cysteine 802/cysteine 810, cysteine 804/cysteine 817, and cysteine 819/cysteine 828. 15 EGF-like domains span residues 106–136 (VPHC…TNCS), 144–179 (WGPH…WRCE), 187–222 (YGND…AFCE), 230–265 (HGPQ…TVCG), 278–308 (SQEC…ERCQ), 316–351 (YGVL…ERCE), 405–440 (YGEA…IDCS), 453–483 (SSRC…VDCS), 491–526 (WGFG…EKCE), 539–569 (AERC…VHCD), 577–612 (WGPN…TTCQ), 665–700 (FGKN…SDCS), 713–743 (IHTC…LYCT), 751–786 (YGKD…RHCE), and 799–829 (RQIC…ARCD). An N-linked (GlcNAc...) asparagine glycan is attached at asparagine 134. Asparagine 496 carries N-linked (GlcNAc...) asparagine glycosylation. A helical transmembrane segment spans residues 858–878 (AIAGIIILVLVVLFLLALFII). Residues 879–1140 (YRHKQKGKES…SSSNSSSSSE (262 aa)) are Cytoplasmic-facing. Residues 945 to 1140 (RDRMTVTKSK…SSSNSSSSSE (196 aa)) form a necessary for formation of large intracellular vacuoles region. The residue at position 1030 (tyrosine 1030) is a Phosphotyrosine; by SRC. The tract at residues 1111 to 1140 (YDLLPVRDSSSSPKQEDSGGSSSNSSSSSE) is disordered. Positions 1128 to 1140 (SGGSSSNSSSSSE) are enriched in low complexity.

This sequence belongs to the MEGF family. As to quaternary structure, homomer. Interacts with GULP1 and ABCA1. Interacts with AP2M1. Does not interact with MEGF11. Binds with high affinity to complement C1q. Interacts (via the cytoplasmic domain) with NOTCH1 (via NICD domain). In terms of processing, phosphorylated on tyrosine residues. Phosphorylation at Tyr-1030 may be important for muscle cell proliferation. Post-translationally, ubiquitinated; mono- and polyubiquitinated forms are detected. Expressed in muscle (at protein level).

It is found in the cell membrane. It localises to the cell projection. Its subcellular location is the phagocytic cup. Functionally, membrane receptor involved in phagocytosis by macrophages and astrocytes of apoptotic cells. Receptor for C1q, an eat-me signal, that binds phosphatidylserine expressed on the surface of apoptotic cells. Cooperates with ABCA1 within the process of engulfment. Promotes the formation of large intracellular vacuoles and may be responsible for the uptake of amyloid-beta peptides. Necessary for astrocyte-dependent apoptotic neuron clearance in the developing cerebellum. Plays role in muscle cell proliferation, adhesion and motility. Is also an essential factor in the regulation of myogenesis. Controls the balance between skeletal muscle satellite cells proliferation and differentiation through regulation of the notch signaling pathway. May also function in the mosaic spacing of specific neuron subtypes in the retina through homotypic retinal neuron repulsion. Mosaics provide a mechanism to distribute each cell type evenly across the retina, ensuring that all parts of the visual field have access to a full set of processing elements. This is Multiple epidermal growth factor-like domains protein 10 from Homo sapiens (Human).